The chain runs to 703 residues: Stonustoxin subunit alpha (703 aa).

A structural MACPF/CDC pore-forming domain region spans residues 2-265; that stretch reads SSDLVMPALG…KAQQLIQEIN (264 aa). Residues 266–385 form a structural FAT domain region; the sequence is VSKVRRIHTT…GMVEGTQAKF (120 aa). A thioredoxin (THX) domain region spans residues 386 to 517; sequence VSNQTELDRE…PRMPFVQGYK (132 aa). A B30.2/SPRY domain is found at 508–703; it reads PRMPFVQGYK…AGNHGTLRLL (196 aa).

Belongs to the SNTX/VTX toxin family. In terms of assembly, heterodimer of alpha and beta subunits; non-covalently linked. In terms of processing, intrachain disulfide bonds may be present in the heterodimer. Not glycosylated. Expressed by the venom gland.

Its subcellular location is the secreted. Its function is as follows. This lethal (towards mammals) heterodimer induces hemolytic activities due to its ability to form pores in the cell membrane. The pore may be composed of 10 SNTX-alpha/beta heterodimers. The toxin elicits potent hypotension which is endothelium-dependent and appears to be mediated by the nitric oxide pathway and activation of potassium channels. In addition, it displays edema-inducing activities, increases vascular permeability. It also shows myotoxic activities and interferes irreversibly with neuromuscular function. It also induces irreversible platelet aggregation in rabbit or rat (but not in human or mouse) whole blood. In addition, it has been observed to increase spontaneous quantal acetylcholine release from isolated frog cutaneous pectoris motor endings. This Synanceia horrida (Estuarine stonefish) protein is Stonustoxin subunit alpha.